A 285-amino-acid polypeptide reads, in one-letter code: NADPH-dependent 7-cyano-7-deazaguanine reductase (285 aa).

Substrate is bound at residue 91–93 (IES). 93-94 (SK) contacts NADPH. The Thioimide intermediate role is filled by cysteine 191. The Proton donor role is filled by aspartate 198. Residue 230-231 (HE) coordinates substrate. Residue 259-260 (RG) participates in NADPH binding.

This sequence belongs to the GTP cyclohydrolase I family. QueF type 2 subfamily. In terms of assembly, homodimer.

It is found in the cytoplasm. The catalysed reaction is 7-aminomethyl-7-carbaguanine + 2 NADP(+) = 7-cyano-7-deazaguanine + 2 NADPH + 3 H(+). The protein operates within tRNA modification; tRNA-queuosine biosynthesis. Catalyzes the NADPH-dependent reduction of 7-cyano-7-deazaguanine (preQ0) to 7-aminomethyl-7-deazaguanine (preQ1). In Legionella pneumophila (strain Corby), this protein is NADPH-dependent 7-cyano-7-deazaguanine reductase.